The sequence spans 383 residues: WAT1-related protein At3g18200 (383 aa).

The segment covering 1–16 has biased composition (basic residues); the sequence is MCYQTSKKKRRSRKRR. Positions 1–23 are disordered; it reads MCYQTSKKKRRSRKRRAQEEKEK. The next 10 helical transmembrane spans lie at 33 to 53, 65 to 85, 91 to 111, 126 to 146, 158 to 178, 204 to 224, 237 to 257, 272 to 292, 300 to 320, and 325 to 345; these read VKLVVALITLQFCFAGFHIVS, VYPVYRNLLALLLIGPFAYFF, PPLTISLLAQFFFLALIGITA, TFASAMQNSVPAITFIMACAL, GVAKVLGTLVSIGGATVITLY, LTLGWLYLMGHCLSWAGWMVL, TLTSFTCFFGLIQFLVIALFV, LFTILYAGIIASGLVVYLQTW, VFVAVFQPLQTLLVAAMAFLI, and LYSGGIVGAVFIMLGLYLVLW. EamA domains are found at residues 44 to 173 and 216 to 344; these read FCFA…GGAT and LSWA…YLVL.

This sequence belongs to the drug/metabolite transporter (DMT) superfamily. Plant drug/metabolite exporter (P-DME) (TC 2.A.7.4) family.

The protein resides in the membrane. This chain is WAT1-related protein At3g18200, found in Arabidopsis thaliana (Mouse-ear cress).